Here is a 519-residue protein sequence, read N- to C-terminus: Ribonuclease Y (519 aa).

A helical membrane pass occupies residues 3–23 (PLAILISILLSLFCLVVGYYV). The KH domain occupies 209–272 (TVSVVNLPND…ETARIALDKL (64 aa)). One can recognise an HD domain in the interval 335–428 (VLKHSMEVAF…VAAADALSAA (94 aa)).

It belongs to the RNase Y family.

The protein localises to the cell membrane. Its function is as follows. Endoribonuclease that initiates mRNA decay. The sequence is that of Ribonuclease Y from Bacillus licheniformis (strain ATCC 14580 / DSM 13 / JCM 2505 / CCUG 7422 / NBRC 12200 / NCIMB 9375 / NCTC 10341 / NRRL NRS-1264 / Gibson 46).